A 369-amino-acid polypeptide reads, in one-letter code: Nuclear pore complex-interacting protein family member A2 (369 aa).

A disordered region spans residues 325–346 (KTPPECLLTPLPPSAPPSADDN).

The protein belongs to the NPIP family.

This Homo sapiens (Human) protein is Nuclear pore complex-interacting protein family member A2 (NPIPA2).